A 303-amino-acid polypeptide reads, in one-letter code: MTTIESQCSIDGILLLNKPQGMTSNAALQKTKHLFGAKKAGHTGSLDPLATGMLPLCFGEATKICQYLLNADKSYETIGRLGIKTNTADCTGEVIFCIENYTVSHEEMIATLEKYKGKIKQIPSMFSALKHKGTPLYRLAREGIEIERKARDIVISQLNLEQFDGECFTLTVSCSKGTYIRNLVEDIGDTLKAGAHMTKLHRLYTAGFENNRMYTLDELQDMPLSQRLACLIPIDQAVQHLTPVILSDSEVTAIRQGKVISNKTGAVEGEDLRLYGEQSQFIGIGQALIHGDIKAKRLVSFAL.

Asp47 serves as the catalytic Nucleophile.

The protein belongs to the pseudouridine synthase TruB family. Type 1 subfamily.

The catalysed reaction is uridine(55) in tRNA = pseudouridine(55) in tRNA. Functionally, responsible for synthesis of pseudouridine from uracil-55 in the psi GC loop of transfer RNAs. The polypeptide is tRNA pseudouridine synthase B (Legionella pneumophila subsp. pneumophila (strain Philadelphia 1 / ATCC 33152 / DSM 7513)).